A 272-amino-acid polypeptide reads, in one-letter code: 5'-nucleotidase SurE (272 aa).

Positions 28, 29, 59, and 115 each coordinate a divalent metal cation.

It belongs to the SurE nucleotidase family. Requires a divalent metal cation as cofactor.

It localises to the cytoplasm. The catalysed reaction is a ribonucleoside 5'-phosphate + H2O = a ribonucleoside + phosphate. Its function is as follows. Nucleotidase that shows phosphatase activity on nucleoside 5'-monophosphates. The sequence is that of 5'-nucleotidase SurE from Chlorobium chlorochromatii (strain CaD3).